We begin with the raw amino-acid sequence, 951 residues long: WD repeat-containing and planar cell polarity effector protein fritz (951 aa).

2 WD repeats span residues 304 to 343 and 345 to 384; these read PMGAQICSFAFSPDQEKLFLGSVDRNICLHDLVQQSTKYA and QIEIVPNQCAWHCDSAMLCVANERSVLQCFDLALATIGHQ. Composition is skewed to polar residues over residues 709 to 720, 757 to 771, and 818 to 828; these read TLKSNSSLQQAP, IPDQSAQLGQFSTMP, and SILSNPANPAP. 3 disordered regions span residues 709 to 776, 816 to 883, and 903 to 951; these read TLKS…SPPP, TASI…AARH, and EYLK…FGVV. The segment covering 930–942 has biased composition (low complexity); sequence SSKGGNSSSSSSS.

It belongs to the WD repeat fritz family.

It is found in the cell membrane. The protein resides in the cytoplasm. It localises to the cytoskeleton. The protein localises to the cilium axoneme. In terms of biological role, probable effector of the planar cell polarity signaling pathway which regulates the septin cytoskeleton in both ciliogenesis and collective cell movements. Functions cell autonomously to regulate wing cell hair polarity and number. The sequence is that of WD repeat-containing and planar cell polarity effector protein fritz (frtz) from Drosophila melanogaster (Fruit fly).